Here is a 252-residue protein sequence, read N- to C-terminus: Short chain dehydrogenase andC (252 aa).

Positions 1-25 (MGFLQDKVVIITGAAAGIGLATATA) are cleaved as a signal peptide. NADP(+) contacts are provided by Ile-11, Asp-57, and Arg-119. Ser-137 functions as the Proton donor in the catalytic mechanism. Residues Tyr-151 and Lys-155 each contribute to the NADP(+) site. Tyr-151 acts as the Proton acceptor in catalysis. Residue Lys-155 is the Lowers pKa of active site Tyr of the active site.

Belongs to the short-chain dehydrogenases/reductases (SDR) family.

Its pathway is secondary metabolite biosynthesis; terpenoid biosynthesis. Functionally, short chain dehydrogenase; part of the gene cluster that mediates the biosynthesis of anditomin, a fungal meroterpenoid. The first step of the pathway is the synthesis of 3,5-dimethylorsellinic acid (DMOA) by the polyketide synthase andM. DMOA is then converted to the phthalide compound 5,7-dihydroxy-4,6-dimethylphthalide (DHDMP) by the cytochrome P450 monooxygenase andK, which is further prenylated by the prenyltransferase andD to yield farnesyl-DHDMP. Further epoxidation by the FAD-dependent monooxygenase andE leads to epoxyfarnesyl-DHDMP. The next step involves the terpene cyclase andB that converts epoxyfarnesyl-DHDMP into preandiloid A through opening of the epoxide ring followed by the cyclization of the farnesyl moiety. Preandiloid A is in turn oxidized at the C-3 hydroxyl group to yield preandiloid B by the dehydrogenase andC. The dioxygenase andA is solely responsible for the dehydrogenation of preandiloid B leading to the enone preandiloid C, as well as for the intriguing structural rearrangement to generate the bicyclo[2.2.2]octane core, transforming preandiloid C into andiconin. FAD-binding monooxygenase andJ then produces andilesin D which is reduced by dehydrogenase andI to yield andilesin A. Action of acetyltransferase andG followed by a spontaneous acetate elimination leads then to andilesin B, which is in turn substrate of the short chain dehydrogenase andH to yield andilesin C. Finally, the dioxygenase andF catalyzes the transformation of andilesin C to anditomin. In Emericella variicolor (Aspergillus stellatus), this protein is Short chain dehydrogenase andC.